Here is a 436-residue protein sequence, read N- to C-terminus: CaM kinase-like vesicle-associated protein (436 aa).

One can recognise a Protein kinase domain in the interval 24–286; the sequence is YDLGQIVKSE…AQEAINHEWI (263 aa). Positions 328–436 are disordered; sequence APENQTAAAT…ALDTVEEQSG (109 aa). The segment covering 333–409 has biased composition (low complexity); sequence TAAATAPAAE…QPPAEPVVHV (77 aa).

Belongs to the protein kinase superfamily. CAMK Ser/Thr protein kinase family. As to quaternary structure, interacts with calmodulin, in the presence of calcium. Requires Ca(2+) as cofactor.

The protein resides in the cytoplasmic vesicle membrane. Its function is as follows. Does not appear to have detectable kinase activity. The chain is CaM kinase-like vesicle-associated protein (camkv) from Danio rerio (Zebrafish).